A 693-amino-acid chain; its full sequence is Oxysterol-binding protein-related protein 2B (693 aa).

Residues 1-15 (MPLTRSKSLPATENG) show a composition bias toward polar residues. The interval 1 to 22 (MPLTRSKSLPATENGGSDRETL) is disordered. The PH domain occupies 25-154 (GRSVAGILYK…WLQALASTRG (130 aa)). Positions 207 to 239 (EVQEQIKLLHEERKKLLDALRQLEMANLEAEAS) form a coiled coil. Disordered regions lie at residues 256–298 (LGRG…GEPD) and 600–639 (EKLPPTDSRLRPDQRHLENGEYEKANEEKQRLERRQRMSR). The span at 274–284 (QEFEDISEEDE) shows a compositional bias: acidic residues. Composition is skewed to basic and acidic residues over residues 285-294 (ASFHDTKESF) and 600-635 (EKLPPTDSRLRPDQRHLENGEYEKANEEKQRLERRQ). The stretch at 612 to 643 (DQRHLENGEYEKANEEKQRLERRQRMSRQIQE) forms a coiled coil.

This sequence belongs to the OSBP family. As to expression, expressed in roots, leaves, stems and flowers.

May be involved in the transport of sterols. The polypeptide is Oxysterol-binding protein-related protein 2B (ORP2B) (Arabidopsis thaliana (Mouse-ear cress)).